The chain runs to 36 residues: MLESIINLVSSGAVDSHTPQTAVAAVLCAAMIGLFS.

This is an uncharacterized protein from Escherichia coli (strain K12).